The primary structure comprises 324 residues: Reaction center protein M chain (324 aa).

The Cytoplasmic portion of the chain corresponds to 2 to 51 (ADYQTIYTQIQARGPHITVSGEWGDNDRVGKPFYSYWLGKIGDAQIGPIY). The helical transmembrane segment at 52–76 (LGASGIAAFAFGSTAILIILFNMAA) threads the bilayer. The Periplasmic portion of the chain corresponds to 77 to 110 (EVHFDPLQFFRQFFWLGLYPPKAQYGMGIPPLHD). A helical membrane pass occupies residues 111–137 (GGWWLMAGLFMTLSLGSWWIRVYSRAR). Over 138–142 (ALGLG) the chain is Cytoplasmic. Residues 143-166 (THIAWNFAAAIFFVLCIGCIHPTL) traverse the membrane as a helical segment. The Periplasmic portion of the chain corresponds to 167–197 (VGSWSEGVPFGIWPHIDWLTAFSIRYGNFYY). H181 and H201 together coordinate (7R,8Z)-bacteriochlorophyll b. A helical membrane pass occupies residues 198 to 223 (CPWHGFSIGFAYGCGLLFAAHGATIL). Fe cation is bound by residues H218 and E233. At 224–259 (AVARFGGDREIEQITDRGTAVERAALFWRWTIGFNA) the chain is on the cytoplasmic side. W251 contacts a ubiquinone. The chain crosses the membrane as a helical span at residues 260–284 (TIESVHRWGWFFSLMVMVSASVGIL). H265 contacts Fe cation. The Periplasmic portion of the chain corresponds to 285–324 (LTGTFVDNWYLWCVKHGAAPDYPAYLPATPDPASLPGAPK).

Belongs to the reaction center PufL/M/PsbA/D family. Reaction center is composed of four bacteriochlorophylls, two bacteriopheophytins, two ubiquinones, one iron, and three highly hydrophobic polypeptide chains (designated L, M, and H).

The protein resides in the cellular chromatophore membrane. Its function is as follows. The reaction center is a membrane-bound complex that mediates the initial photochemical event in the electron transfer process of photosynthesis. In Blastochloris viridis (Rhodopseudomonas viridis), this protein is Reaction center protein M chain (pufM).